Reading from the N-terminus, the 442-residue chain is tRNA-2-methylthio-N(6)-dimethylallyladenosine synthase (442 aa).

The MTTase N-terminal domain maps to 3–120 (KKLYIETHGC…LPEMIDAARI (118 aa)). [4Fe-4S] cluster contacts are provided by Cys-12, Cys-49, Cys-83, Cys-157, Cys-161, and Cys-164. In terms of domain architecture, Radical SAM core spans 143-375 (RIDGPSAYVS…QHRLNQQGFE (233 aa)). Residues 378 to 442 (RQMVGSVQRI…PHSLRGSLIQ (65 aa)) enclose the TRAM domain.

It belongs to the methylthiotransferase family. MiaB subfamily. Monomer. [4Fe-4S] cluster serves as cofactor.

Its subcellular location is the cytoplasm. The enzyme catalyses N(6)-dimethylallyladenosine(37) in tRNA + (sulfur carrier)-SH + AH2 + 2 S-adenosyl-L-methionine = 2-methylsulfanyl-N(6)-dimethylallyladenosine(37) in tRNA + (sulfur carrier)-H + 5'-deoxyadenosine + L-methionine + A + S-adenosyl-L-homocysteine + 2 H(+). Catalyzes the methylthiolation of N6-(dimethylallyl)adenosine (i(6)A), leading to the formation of 2-methylthio-N6-(dimethylallyl)adenosine (ms(2)i(6)A) at position 37 in tRNAs that read codons beginning with uridine. This Pseudomonas fluorescens (strain Pf0-1) protein is tRNA-2-methylthio-N(6)-dimethylallyladenosine synthase.